The chain runs to 117 residues: MNFVLSLIFLALILKGVQCEVHLVESGGGLVKPGGSLKLSCVVSGFTFNKYAMSWVRQTPEKRLEWVATISSGGLYTYYPDSVKGRFTISRDNAGNTLYLQMSSLRSEDTAMYYCAR.

The first 19 residues, 1–19, serve as a signal peptide directing secretion; sequence MNFVLSLIFLALILKGVQC. The framework-1 stretch occupies residues 20–49; sequence EVHLVESGGGLVKPGGSLKLSCVVSGFTFN. A disulfide bridge connects residues cysteine 41 and cysteine 115. A complementarity-determining-1 region spans residues 50 to 54; it reads KYAMS. Residues 55-68 form a framework-2 region; that stretch reads WVRQTPEKRLEWVA. The complementarity-determining-2 stretch occupies residues 69–85; sequence TISSGGLYTYYPDSVKG. The framework-3 stretch occupies residues 86-117; sequence RFTISRDNAGNTLYLQMSSLRSEDTAMYYCAR.

In Mus musculus (Mouse), this protein is Ig heavy chain V region 5-76.